A 367-amino-acid chain; its full sequence is Alanine racemase (367 aa).

Lysine 40 acts as the Proton acceptor; specific for D-alanine in catalysis. An N6-(pyridoxal phosphate)lysine modification is found at lysine 40. A substrate-binding site is contributed by arginine 136. The active-site Proton acceptor; specific for L-alanine is tyrosine 263. A substrate-binding site is contributed by methionine 310.

The protein belongs to the alanine racemase family. The cofactor is pyridoxal 5'-phosphate.

It catalyses the reaction L-alanine = D-alanine. Its pathway is amino-acid biosynthesis; D-alanine biosynthesis; D-alanine from L-alanine: step 1/1. Catalyzes the interconversion of L-alanine and D-alanine. May also act on other amino acids. The sequence is that of Alanine racemase (alr) from Streptococcus thermophilus (strain ATCC BAA-491 / LMD-9).